Reading from the N-terminus, the 410-residue chain is Riboflavin biosynthesis protein RibBA (410 aa).

The tract at residues 1 to 205 (MENKRIDTIE…IKDLVAFQMR (205 aa)) is DHBP synthase. D-ribulose 5-phosphate-binding positions include 30–31 (RE), aspartate 35, 144–148 (RVGHT), and glutamate 168. Glutamate 31 provides a ligand contact to Mg(2+). Residue histidine 147 coordinates Mg(2+). Residues 206–410 (RSKLVQRAVE…ISCSCGSGNH (205 aa)) form a GTP cyclohydrolase II region. 256 to 260 (RVHSQ) is a binding site for GTP. The Zn(2+) site is built by cysteine 261, cysteine 272, and cysteine 274. GTP contacts are provided by residues glutamine 277, 299 to 301 (EGR), and threonine 321. Aspartate 333 serves as the catalytic Proton acceptor; for GTP cyclohydrolase activity. Arginine 335 functions as the Nucleophile; for GTP cyclohydrolase activity in the catalytic mechanism. Positions 356 and 361 each coordinate GTP.

The protein in the N-terminal section; belongs to the DHBP synthase family. It in the C-terminal section; belongs to the GTP cyclohydrolase II family. It depends on Mg(2+) as a cofactor. Mn(2+) is required as a cofactor. The cofactor is Zn(2+).

The catalysed reaction is D-ribulose 5-phosphate = (2S)-2-hydroxy-3-oxobutyl phosphate + formate + H(+). It catalyses the reaction GTP + 4 H2O = 2,5-diamino-6-hydroxy-4-(5-phosphoribosylamino)-pyrimidine + formate + 2 phosphate + 3 H(+). The protein operates within cofactor biosynthesis; riboflavin biosynthesis; 2-hydroxy-3-oxobutyl phosphate from D-ribulose 5-phosphate: step 1/1. It participates in cofactor biosynthesis; riboflavin biosynthesis; 5-amino-6-(D-ribitylamino)uracil from GTP: step 1/4. In terms of biological role, catalyzes the conversion of D-ribulose 5-phosphate to formate and 3,4-dihydroxy-2-butanone 4-phosphate. Functionally, catalyzes the conversion of GTP to 2,5-diamino-6-ribosylamino-4(3H)-pyrimidinone 5'-phosphate (DARP), formate and pyrophosphate. The chain is Riboflavin biosynthesis protein RibBA from Chlorobium phaeovibrioides (strain DSM 265 / 1930) (Prosthecochloris vibrioformis (strain DSM 265)).